Consider the following 101-residue polypeptide: Small ribosomal subunit protein uS14 (101 aa).

The protein belongs to the universal ribosomal protein uS14 family. In terms of assembly, part of the 30S ribosomal subunit. Contacts proteins S3 and S10.

In terms of biological role, binds 16S rRNA, required for the assembly of 30S particles and may also be responsible for determining the conformation of the 16S rRNA at the A site. This is Small ribosomal subunit protein uS14 from Escherichia coli O8 (strain IAI1).